The chain runs to 875 residues: Valine--tRNA ligase (875 aa).

A 'HIGH' region motif is present at residues Pro43–His53. Residues Lys534–Ser538 carry the 'KMSKS' region motif. Residue Lys537 coordinates ATP. Residues Gly805–Lys875 are a coiled coil.

It belongs to the class-I aminoacyl-tRNA synthetase family. ValS type 1 subfamily. In terms of assembly, monomer.

It localises to the cytoplasm. It carries out the reaction tRNA(Val) + L-valine + ATP = L-valyl-tRNA(Val) + AMP + diphosphate. Functionally, catalyzes the attachment of valine to tRNA(Val). As ValRS can inadvertently accommodate and process structurally similar amino acids such as threonine, to avoid such errors, it has a 'posttransfer' editing activity that hydrolyzes mischarged Thr-tRNA(Val) in a tRNA-dependent manner. The chain is Valine--tRNA ligase from Phocaeicola vulgatus (strain ATCC 8482 / DSM 1447 / JCM 5826 / CCUG 4940 / NBRC 14291 / NCTC 11154) (Bacteroides vulgatus).